The primary structure comprises 174 residues: Small ribosomal subunit protein uS5 (174 aa).

The 64-residue stretch at 16–79 folds into the S5 DRBM domain; that stretch reads FSELIVSVRR…NAAKKNMIRV (64 aa).

This sequence belongs to the universal ribosomal protein uS5 family. In terms of assembly, part of the 30S ribosomal subunit. Contacts proteins S4 and S8.

In terms of biological role, with S4 and S12 plays an important role in translational accuracy. Its function is as follows. Located at the back of the 30S subunit body where it stabilizes the conformation of the head with respect to the body. In Ehrlichia canis (strain Jake), this protein is Small ribosomal subunit protein uS5.